Here is a 572-residue protein sequence, read N- to C-terminus: Proline--tRNA ligase (572 aa).

Belongs to the class-II aminoacyl-tRNA synthetase family. ProS type 1 subfamily. As to quaternary structure, homodimer.

The protein localises to the cytoplasm. It carries out the reaction tRNA(Pro) + L-proline + ATP = L-prolyl-tRNA(Pro) + AMP + diphosphate. Functionally, catalyzes the attachment of proline to tRNA(Pro) in a two-step reaction: proline is first activated by ATP to form Pro-AMP and then transferred to the acceptor end of tRNA(Pro). As ProRS can inadvertently accommodate and process non-cognate amino acids such as alanine and cysteine, to avoid such errors it has two additional distinct editing activities against alanine. One activity is designated as 'pretransfer' editing and involves the tRNA(Pro)-independent hydrolysis of activated Ala-AMP. The other activity is designated 'posttransfer' editing and involves deacylation of mischarged Ala-tRNA(Pro). The misacylated Cys-tRNA(Pro) is not edited by ProRS. In Pectobacterium carotovorum subsp. carotovorum (strain PC1), this protein is Proline--tRNA ligase.